Reading from the N-terminus, the 289-residue chain is Putative 2-aminoethylphosphonate transport system permease protein PhnU (289 aa).

The next 6 membrane-spanning stretches (helical) occupy residues 19-39 (WLLL…SLIV), 76-96 (FFAT…LVFI), 111-131 (FIAL…GSAG), 150-170 (FLYS…PLVM), 202-222 (VIFP…LLLT), and 254-274 (YTVA…LFSL). One can recognise an ABC transmembrane type-1 domain in the interval 68–275 (LLNTLQIAFF…VLSLGLFSLY (208 aa)).

Belongs to the binding-protein-dependent transport system permease family.

Its subcellular location is the cell inner membrane. Its function is as follows. Probably part of the PhnSTUV complex (TC 3.A.1.11.5) involved in 2-aminoethylphosphonate import. Probably responsible for the translocation of the substrate across the membrane. The protein is Putative 2-aminoethylphosphonate transport system permease protein PhnU (phnU) of Salmonella paratyphi A (strain ATCC 9150 / SARB42).